Consider the following 185-residue polypeptide: Protein N-terminal glutamine amidohydrolase (185 aa).

Active-site residues include Cys14, His62, and Asp78.

The protein belongs to the NTAQ1 family. In terms of assembly, monomer.

The enzyme catalyses N-terminal L-glutaminyl-[protein] + H2O = N-terminal L-glutamyl-[protein] + NH4(+). Its function is as follows. Mediates the side-chain deamidation of N-terminal glutamine residues to glutamate, an important step in N-end rule pathway of protein degradation. Conversion of the resulting N-terminal glutamine to glutamate renders the protein susceptible to arginylation, polyubiquitination and degradation as specified by the N-end rule. Does not act on substrates with internal or C-terminal glutamine and does not act on non-glutamine residues in any position. The protein is Protein N-terminal glutamine amidohydrolase of Caenorhabditis briggsae.